The primary structure comprises 473 residues: Photosystem II CP43 reaction center protein (473 aa).

The propeptide occupies 1-14; the sequence is MKTLYSLRRFYHVE. Thr-15 carries the post-translational modification N-acetylthreonine. Residue Thr-15 is modified to Phosphothreonine. Transmembrane regions (helical) follow at residues 69 to 93, 134 to 155, 178 to 200, 255 to 275, and 291 to 312; these read LFEV…PHLA, LLGP…KDRN, KAFY…RKIT, KPFA…LSYS, and WFNN…ASQA. Glu-367 contacts [CaMn4O5] cluster. A helical membrane pass occupies residues 447 to 471; the sequence is RARAAAAGFEKGIDRDFEPVLSMTP.

This sequence belongs to the PsbB/PsbC family. PsbC subfamily. In terms of assembly, PSII is composed of 1 copy each of membrane proteins PsbA, PsbB, PsbC, PsbD, PsbE, PsbF, PsbH, PsbI, PsbJ, PsbK, PsbL, PsbM, PsbT, PsbX, PsbY, PsbZ, Psb30/Ycf12, at least 3 peripheral proteins of the oxygen-evolving complex and a large number of cofactors. It forms dimeric complexes. Binds multiple chlorophylls and provides some of the ligands for the Ca-4Mn-5O cluster of the oxygen-evolving complex. It may also provide a ligand for a Cl- that is required for oxygen evolution. PSII binds additional chlorophylls, carotenoids and specific lipids. serves as cofactor.

The protein localises to the plastid. The protein resides in the chloroplast thylakoid membrane. One of the components of the core complex of photosystem II (PSII). It binds chlorophyll and helps catalyze the primary light-induced photochemical processes of PSII. PSII is a light-driven water:plastoquinone oxidoreductase, using light energy to abstract electrons from H(2)O, generating O(2) and a proton gradient subsequently used for ATP formation. The polypeptide is Photosystem II CP43 reaction center protein (Pisum sativum (Garden pea)).